Reading from the N-terminus, the 410-residue chain is Arginine deiminase (410 aa).

Cysteine 398 serves as the catalytic Amidino-cysteine intermediate.

Belongs to the arginine deiminase family. Homodimer.

It localises to the cytoplasm. The catalysed reaction is L-arginine + H2O = L-citrulline + NH4(+). It participates in amino-acid degradation; L-arginine degradation via ADI pathway; carbamoyl phosphate from L-arginine: step 1/2. The chain is Arginine deiminase (arcA) from Mycoplasmopsis arginini (Mycoplasma arginini).